Consider the following 431-residue polypeptide: Adenylosuccinate lyase (431 aa).

N(6)-(1,2-dicarboxyethyl)-AMP contacts are provided by residues 4–5 (RY), 67–69 (RHD), and 93–94 (TS). Histidine 141 acts as the Proton donor/acceptor in catalysis. Residue glutamine 212 participates in N(6)-(1,2-dicarboxyethyl)-AMP binding. Residue serine 262 is the Proton donor/acceptor of the active site. N(6)-(1,2-dicarboxyethyl)-AMP contacts are provided by residues serine 263, 268 to 270 (KRN), asparagine 276, and 307 to 311 (SAERI).

It belongs to the lyase 1 family. Adenylosuccinate lyase subfamily. In terms of assembly, homodimer and homotetramer. Residues from neighboring subunits contribute catalytic and substrate-binding residues to each active site.

It catalyses the reaction N(6)-(1,2-dicarboxyethyl)-AMP = fumarate + AMP. The enzyme catalyses (2S)-2-[5-amino-1-(5-phospho-beta-D-ribosyl)imidazole-4-carboxamido]succinate = 5-amino-1-(5-phospho-beta-D-ribosyl)imidazole-4-carboxamide + fumarate. The protein operates within purine metabolism; AMP biosynthesis via de novo pathway; AMP from IMP: step 2/2. It functions in the pathway purine metabolism; IMP biosynthesis via de novo pathway; 5-amino-1-(5-phospho-D-ribosyl)imidazole-4-carboxamide from 5-amino-1-(5-phospho-D-ribosyl)imidazole-4-carboxylate: step 2/2. Its function is as follows. Catalyzes two reactions in de novo purine nucleotide biosynthesis. Catalyzes the breakdown of 5-aminoimidazole- (N-succinylocarboxamide) ribotide (SAICAR or 2-[5-amino-1-(5-phospho-beta-D-ribosyl)imidazole-4-carboxamido]succinate) to 5-aminoimidazole-4-carboxamide ribotide (AICAR or 5-amino-1-(5-phospho-beta-D-ribosyl)imidazole-4-carboxamide) and fumarate, and of adenylosuccinate (ADS or N(6)-(1,2-dicarboxyethyl)-AMP) to adenosine monophosphate (AMP) and fumarate. In Staphylococcus saprophyticus subsp. saprophyticus (strain ATCC 15305 / DSM 20229 / NCIMB 8711 / NCTC 7292 / S-41), this protein is Adenylosuccinate lyase (purB).